The primary structure comprises 274 residues: UPF0758 protein RHE_CH01848 (274 aa).

Residues 1-37 are disordered; that stretch reads MAKGPVATSSDDELPFETEEPVADERSFFGGRPQKPA. Acidic residues predominate over residues 10–22; it reads SDDELPFETEEPV. The region spanning 152 to 274 is the MPN domain; it reads VLSSWSSVIQ…HVSLKGLKLI (123 aa). Residues His223, His225, and Asp236 each coordinate Zn(2+). A JAMM motif motif is present at residues 223 to 236; sequence HNHPSGDPTPSRAD.

It belongs to the UPF0758 family.

This Rhizobium etli (strain ATCC 51251 / DSM 11541 / JCM 21823 / NBRC 15573 / CFN 42) protein is UPF0758 protein RHE_CH01848.